The primary structure comprises 526 residues: Cyclin-L1 (526 aa).

The segment at 1–36 (MASGPHSTATAAAAASSAAPSAGGSSSGTTTTTTTT) is disordered. Cyclin-like regions lie at residues 88-190 (ELIQ…RVLK) and 203-287 (KIIV…ETLR). The tract at residues 318 to 526 (KGLNPDGTPA…SRSGHGRHRR (209 aa)) is disordered. Threonine 325 is modified (phosphothreonine). A phosphoserine mark is found at serine 335 and serine 338. Residues lysine 339 and lysine 347 each participate in a glycyl lysine isopeptide (Lys-Gly) (interchain with G-Cter in SUMO2) cross-link. Over residues 342 to 352 (SPREVKAEEKS) the composition is skewed to basic and acidic residues. Residues serine 352 and serine 355 each carry the phosphoserine modification. A compositionally biased stretch (basic and acidic residues) spans 361-370 (VKKEPEDRQQ). Lysine 362 participates in a covalent cross-link: Glycyl lysine isopeptide (Lys-Gly) (interchain with G-Cter in SUMO2). Position 374 is a phosphoserine (serine 374). Basic residues-rich tracts occupy residues 382–418 (DSKR…RRSR), 438–452 (RRHH…KAKH), 460–476 (SNRH…RSQS), and 486–498 (KKHR…HRDR). Residues 390–432 (RSASRSRSRTRSRSRSHTPRRHYNNRRSRSGTYSSRSRSRSRS) form an RS region. Serine 445 carries the phosphoserine modification. Residues 499–508 (RERSRSFERS) are compositionally biased toward basic and acidic residues. Over residues 509-526 (HKSKHHGGSRSGHGRHRR) the composition is skewed to basic residues.

The protein belongs to the cyclin family. Cyclin L subfamily. (Microbial infection) Interacts with human herpes virus 1 (HHV-1) transcriptional regulator ICP22. In terms of assembly, interacts with POLR2A via its hyperphosphorylated C-terminal domain (CTD). Interacts with CDK11A, CDK12 and CDK13. Isoforms 1 and 2, but not isoform 3, interact with CDK11B. May form a ternary complex with CDK11B and casein kinase II (CKII). Interacts with pre-mRNA-splicing factors, including at least SRSF1, SRSF2 and SRSF7/SLU7. Widely expressed. Overexpression in primary tumors of head and neck squamous cell carcinomas (HNSCC).

Its subcellular location is the nucleus speckle. It localises to the nucleus. It is found in the nucleoplasm. Involved in pre-mRNA splicing. Functions in association with cyclin-dependent kinases (CDKs). Inhibited by the CDK-specific inhibitor CDKN1A/p21. May play a role in the regulation of RNA polymerase II (pol II). May be a candidate proto-oncogene in head and neck squamous cell carcinomas (HNSCC). This chain is Cyclin-L1 (CCNL1), found in Homo sapiens (Human).